Reading from the N-terminus, the 271-residue chain is Thiazole synthase (271 aa).

The active-site Schiff-base intermediate with DXP is the K104. 1-deoxy-D-xylulose 5-phosphate is bound by residues G165, 192–193 (AG), and 214–215 (NT).

Belongs to the ThiG family. In terms of assembly, homotetramer. Forms heterodimers with either ThiH or ThiS.

It is found in the cytoplasm. It catalyses the reaction [ThiS sulfur-carrier protein]-C-terminal-Gly-aminoethanethioate + 2-iminoacetate + 1-deoxy-D-xylulose 5-phosphate = [ThiS sulfur-carrier protein]-C-terminal Gly-Gly + 2-[(2R,5Z)-2-carboxy-4-methylthiazol-5(2H)-ylidene]ethyl phosphate + 2 H2O + H(+). The protein operates within cofactor biosynthesis; thiamine diphosphate biosynthesis. Its function is as follows. Catalyzes the rearrangement of 1-deoxy-D-xylulose 5-phosphate (DXP) to produce the thiazole phosphate moiety of thiamine. Sulfur is provided by the thiocarboxylate moiety of the carrier protein ThiS. In vitro, sulfur can be provided by H(2)S. In Burkholderia mallei (strain ATCC 23344), this protein is Thiazole synthase.